We begin with the raw amino-acid sequence, 102 residues long: Citrate lyase acyl carrier protein (102 aa).

Ser14 bears the O-(phosphoribosyl dephospho-coenzyme A)serine mark.

This sequence belongs to the CitD family. Oligomer with a subunit composition of (alpha,beta,gamma)6.

The protein resides in the cytoplasm. Functionally, covalent carrier of the coenzyme of citrate lyase. This chain is Citrate lyase acyl carrier protein, found in Serratia proteamaculans (strain 568).